The following is a 481-amino-acid chain: MAYEDLREFIGRLEDKGELARVKHEVSPILEMSEVADRTVKAGGKALLFERPKGYDIPVFMNAFGTERRMKLALEVERLEEIGERLLSALEFRPSSFMDALKGVGMLKDFMSFIPKKTGKAPCKEVVAESLDKFPILKCWPKDAGRFITFPVVITKDPETGEMNAGMYRMQVFDGKTTGMHWQIHKHGAEHFRKMAEKGGGKIEVAVAIGVDPATLYAATAPLPSGISEFMFAGFIRKERLKVTECETVDLLVPANAEIILEGYVRVDEMRVEGPFGDHTGYYTPPEPYPVFHITHITHRENPIYHATVVGKPPMEDAWLGKATERIFLPILRMMHPEIVDINLPVEGAFHNLAIVSIKKRYPGQAKKVMYAIWGTGMLSLTKIVVVVDDDVNVHDMREVVWAVTSRFDPARDVVILPPSPTDSLDHSAYIPNLAGKLGIDATKKWRDEGYEREWPDVVEMDAETKRKVDAIWNEIRNMVL.

The protein belongs to the UbiD family.

This is an uncharacterized protein from Archaeoglobus fulgidus (strain ATCC 49558 / DSM 4304 / JCM 9628 / NBRC 100126 / VC-16).